The following is a 239-amino-acid chain: Ribonuclease 3 (239 aa).

An RNase III domain is found at 18–141; the sequence is YLTLEKALGY…LMAGVYLEAG (124 aa). A Mg(2+)-binding site is contributed by Glu54. Residue Asp58 is part of the active site. Mg(2+) is bound by residues Ser127 and Glu130. Residue Glu130 is part of the active site. The DRBM domain occupies 168–237; that stretch reads DYKTALQELT…AYQALQKLKE (70 aa).

Belongs to the ribonuclease III family. In terms of assembly, homodimer. It depends on Mg(2+) as a cofactor.

The protein resides in the cytoplasm. The enzyme catalyses Endonucleolytic cleavage to 5'-phosphomonoester.. Digests double-stranded RNA. Involved in the processing of primary rRNA transcript to yield the immediate precursors to the large and small rRNAs (23S and 16S). Processes some mRNAs, and tRNAs when they are encoded in the rRNA operon. Processes pre-crRNA and tracrRNA of type II CRISPR loci if present in the organism. The chain is Ribonuclease 3 from Helicobacter pylori (strain J99 / ATCC 700824) (Campylobacter pylori J99).